We begin with the raw amino-acid sequence, 1406 residues long: DNA-directed RNA polymerase subunit beta' (1406 aa).

Cys-70, Cys-72, Cys-85, and Cys-88 together coordinate Zn(2+). Mg(2+) contacts are provided by Asp-460, Asp-462, and Asp-464. The Zn(2+) site is built by Cys-814, Cys-888, Cys-895, and Cys-898.

Belongs to the RNA polymerase beta' chain family. In terms of assembly, the RNAP catalytic core consists of 2 alpha, 1 beta, 1 beta' and 1 omega subunit. When a sigma factor is associated with the core the holoenzyme is formed, which can initiate transcription. Requires Mg(2+) as cofactor. The cofactor is Zn(2+).

The catalysed reaction is RNA(n) + a ribonucleoside 5'-triphosphate = RNA(n+1) + diphosphate. Its function is as follows. DNA-dependent RNA polymerase catalyzes the transcription of DNA into RNA using the four ribonucleoside triphosphates as substrates. The protein is DNA-directed RNA polymerase subunit beta' of Photorhabdus laumondii subsp. laumondii (strain DSM 15139 / CIP 105565 / TT01) (Photorhabdus luminescens subsp. laumondii).